The chain runs to 357 residues: Transcription factor HHO1 (357 aa).

2 disordered regions span residues 94–117 (TSIEEEVDDKDDDDEEHQSHETDI) and 171–198 (NNNIKSPVTTSDGGSGGGGGRRGQRKNR). Residues 96–109 (IEEEVDDKDDDDEE) are compositionally biased toward acidic residues. The span at 171–182 (NNNIKSPVTTSD) shows a compositional bias: polar residues. In terms of domain architecture, HTH myb-type spans 193–253 (GQRKNRRCWS…HLQKYRLHAR (61 aa)). The H-T-H motif DNA-binding region spans 224-249 (PKQIRDIMKVDGLTNDEVKSHLQKYR).

The protein resides in the nucleus. Probable factor involved in nitrate and phosphate signaling in roots. Integrates nitrate and phosphate starvation responses and adaptation of root architecture, depending on nutrient availabilities. Acts downstream of the nitrate sensor and transporter NPF6.3/NRT1.1. Represses primary root development in response to phosphate deficiency conditions, only when nitrate is present. This is Transcription factor HHO1 from Arabidopsis thaliana (Mouse-ear cress).